Here is a 310-residue protein sequence, read N- to C-terminus: uncharacterized protein (310 aa).

2 disordered regions span residues 22–163 and 178–209; these read LARQ…PVEH and EAEA…VEGD. Basic and acidic residues-rich tracts occupy residues 56–66 and 183–197; these read IIRDDHHHAGP and TEVR…ERHA. Over residues 198 to 209 the composition is skewed to low complexity; sequence AAAAAGTDVEGD. 3 consecutive transmembrane segments (helical) span residues 231-251, 257-277, and 286-306; these read ALVV…FIAF, WNSI…VVSV, and IAST…PLAL.

It to M.leprae ML2433.

It localises to the cell membrane. This is an uncharacterized protein from Mycobacterium tuberculosis (strain CDC 1551 / Oshkosh).